A 555-amino-acid chain; its full sequence is MSKQIVHGDQCRKKIIEGINVVANAVGITLGPKGRCVAIEQSYGPPKITKDGVSVAKAIQLKDKSLNVGAQFVISVASKTADVAGDGTTTATVIADAAVRELNKAEVAGIDIQEVRKGAEKAVEAVIADVRKNSSPVKNEEEIAQVATVSSNGDREIGEKIANAMKQVGQEGVITVEDSKNFNFEVEVVKGMRFDRGYISQYFATNREKMITEFENPYILLLDQKVSTVQPLVPVLEAVAHTGKPLVLIADDVDGEALTALILNNLKGSIKVVAVKAPGFGDRKKEMLEDIAILTNGEVITEQLGIKLEKVNDTSKLGTANRVIVTKDHTTIVHDKNNSDIEKKVNSRCEQIREAIKDTTSDYEKEKLQERLAKLRNGVAVLKVGGATEVEQKERKDRVEDALHATRAAVEEGIVPGGGVALFYASRVLDSLKFDNEDQRVGINIIKKVLEAPVRQIVKNAGGKEDVVVNELSKSTDKNRGFDARTMQYVDMIKAGIVDPTKVVRTALQDAFSVASLVIATSAMITDHEEDNNTGNRSGGGVGGGHHGGMGGMDF.

ATP contacts are provided by residues 29-32 (TLGP), Lys50, 86-90 (DGTTT), Gly418, and Asp499. The disordered stretch occupies residues 528–555 (HEEDNNTGNRSGGGVGGGHHGGMGGMDF). Positions 537–555 (RSGGGVGGGHHGGMGGMDF) are enriched in gly residues.

The protein belongs to the chaperonin (HSP60) family. In terms of assembly, forms a cylinder of 14 subunits composed of two heptameric rings stacked back-to-back. Interacts with the co-chaperonin GroES.

Its subcellular location is the cytoplasm. The enzyme catalyses ATP + H2O + a folded polypeptide = ADP + phosphate + an unfolded polypeptide.. In terms of biological role, together with its co-chaperonin GroES, plays an essential role in assisting protein folding. The GroEL-GroES system forms a nano-cage that allows encapsulation of the non-native substrate proteins and provides a physical environment optimized to promote and accelerate protein folding. The chain is Chaperonin GroEL from Orientia tsutsugamushi (Rickettsia tsutsugamushi).